The primary structure comprises 307 residues: Small ribosomal subunit biogenesis GTPase RsgA (307 aa).

A disordered region spans residues 1–20; that stretch reads MPSEHPFSDGISTPNPKETM. The segment covering 10–20 has biased composition (polar residues); the sequence is GISTPNPKETM. The CP-type G domain maps to 85 to 242; sequence RQDAWKTKLI…LIDSPGLQEF (158 aa). Residues 135 to 138 and 184 to 192 contribute to the GTP site; these read NKAD and GQSGMGKST. Zn(2+)-binding residues include Cys-266, Cys-271, His-273, and Cys-279.

Belongs to the TRAFAC class YlqF/YawG GTPase family. RsgA subfamily. As to quaternary structure, monomer. Associates with 30S ribosomal subunit, binds 16S rRNA. The cofactor is Zn(2+).

It is found in the cytoplasm. In terms of biological role, one of several proteins that assist in the late maturation steps of the functional core of the 30S ribosomal subunit. Helps release RbfA from mature subunits. May play a role in the assembly of ribosomal proteins into the subunit. Circularly permuted GTPase that catalyzes slow GTP hydrolysis, GTPase activity is stimulated by the 30S ribosomal subunit. The sequence is that of Small ribosomal subunit biogenesis GTPase RsgA from Neisseria meningitidis serogroup C / serotype 2a (strain ATCC 700532 / DSM 15464 / FAM18).